Consider the following 159-residue polypeptide: uncharacterized protein (159 aa).

The next 2 helical transmembrane spans lie at 17–37 (ALFI…TILV) and 40–60 (LLQF…FKKY).

The protein resides in the cell membrane. This is an uncharacterized protein from Borreliella burgdorferi (strain ATCC 35210 / DSM 4680 / CIP 102532 / B31) (Borrelia burgdorferi).